We begin with the raw amino-acid sequence, 586 residues long: 25S rRNA (adenine-N(1))-methyltransferase (586 aa).

Disordered stretches follow at residues 23–229 (GTAP…LTPL) and 536–573 (GKCV…EVKD). Residues 25-41 (APAAPAPASAPAVSSSK) show a composition bias toward low complexity. The span at 65 to 83 (LWEKVIEQKKEGVADGVKK) shows a compositional bias: basic and acidic residues. Positions 99-108 (KLSNSNNDGN) are enriched in polar residues. Over residues 114 to 123 (NNKKKNKNKN) the composition is skewed to basic residues. Over residues 144 to 163 (GEEDEDDNNDDADEWEGIDE) the composition is skewed to acidic residues. Residues 164 to 182 (DEKHASSEKPTPKKDDKKQ) show a composition bias toward basic and acidic residues. The span at 183-192 (QQLQQQQQQK) shows a compositional bias: low complexity. Polar residues predominate over residues 204-213 (NGTTSNWQQD). Over residues 217-229 (PKTATPAPKLTPL) the composition is skewed to low complexity. Over residues 539–549 (VPKDGQEDTTK) the composition is skewed to basic and acidic residues. Positions 550 to 559 (NKKGGQKPKP) are enriched in basic residues.

The protein belongs to the methyltransferase superfamily. RRP8 family.

The protein resides in the nucleus. It is found in the nucleolus. Functionally, S-adenosyl-L-methionine-dependent methyltransferase that specifically methylates the N(1) position of a conserved adenine in helix 25.1 in 25S rRNA. Required both for ribosomal 40S and 60S subunits biogenesis. Required for efficient pre-rRNA cleavage at site A2. The sequence is that of 25S rRNA (adenine-N(1))-methyltransferase (RPR8) from Chaetomium thermophilum (strain DSM 1495 / CBS 144.50 / IMI 039719) (Thermochaetoides thermophila).